Here is a 300-residue protein sequence, read N- to C-terminus: Taste receptor type 2 member 105 (300 aa).

Over 1-7 (MLSAAEG) the chain is Extracellular. The chain crosses the membrane as a helical span at residues 8-28 (ILLSIATVEAGLGVLGNTFIA). Residues 29–43 (LVNCMDWAKNNKLSM) lie on the Cytoplasmic side of the membrane. Residues 44–64 (TGFLLIGLATSRIFIVWLLTL) form a helical membrane-spanning segment. Residues 65–87 (DAYAKLFYPSKYFSSSLIEIISY) lie on the Extracellular side of the membrane. A helical transmembrane segment spans residues 88–108 (IWMTVNHLTVWFATSLSIFYF). Residues 109 to 128 (LKIANFSDCVFLWLKRRTDK) lie on the Cytoplasmic side of the membrane. The chain crosses the membrane as a helical span at residues 129-149 (AFVFLLGCLLTSWVISFSFVV). At 150 to 181 (KVMKDGKVNHRNRTSEMYWEKRQFTINYVFLN) the chain is on the extracellular side. An N-linked (GlcNAc...) asparagine glycan is attached at N161. The chain crosses the membrane as a helical span at residues 182–202 (IGVISLFMMTLTACFLLIMSL). Over 203 to 233 (WRHSRQMQSGVSGFRDLNTEAHVKAIKFLIS) the chain is Cytoplasmic. The chain crosses the membrane as a helical span at residues 234–254 (FIILFVLYFIGVSIEIICIFI). Residues 255–259 (PENKL) lie on the Extracellular side of the membrane. A helical membrane pass occupies residues 260-280 (LFIFGFTTASIYPCCHSFILI). Over 281–300 (LSNSQLKQAFVKVLQGLKFF) the chain is Cytoplasmic.

The protein belongs to the G-protein coupled receptor T2R family. In terms of tissue distribution, expressed in subsets of taste receptor cells of the tongue and palate epithelium and exclusively in gustducin-positive cells. Expressed in gastric and duodenal tissues.

It is found in the membrane. Its function is as follows. Gustducin-coupled cycloheximide receptor implicated in the perception of bitter compounds in the oral cavity and the gastrointestinal tract. Signals through PLCB2 and the calcium-regulated cation channel TRPM5. This Mus musculus (Mouse) protein is Taste receptor type 2 member 105 (Tas2r105).